Reading from the N-terminus, the 1078-residue chain is Carbamoyl phosphate synthase large chain (1078 aa).

The interval 1–401 is carboxyphosphate synthetic domain; sequence MARQPLVSSV…ALQKAVRGLE (401 aa). ATP contacts are provided by arginine 129, arginine 169, glycine 175, glycine 176, arginine 208, leucine 210, glutamate 215, glycine 241, valine 242, histidine 243, glutamine 284, and glutamate 298. The region spanning 133-327 is the ATP-grasp 1 domain; sequence KELLLEIGEP…IARIAAKLAI (195 aa). Mg(2+) is bound by residues glutamine 284, glutamate 298, and asparagine 300. Positions 284, 298, and 300 each coordinate Mn(2+). Positions 402–546 are oligomerization domain; it reads TDQTDLTWED…YATYEDENEA (145 aa). A carbamoyl phosphate synthetic domain region spans residues 547–935; the sequence is PPLDSPKAVV…ALAKAFLAAG (389 aa). Positions 677–867 constitute an ATP-grasp 2 domain; that stretch reads ERFLHELGIP…MVDVATQILL (191 aa). 10 residues coordinate ATP: arginine 713, lysine 752, leucine 754, glutamate 758, glycine 783, valine 784, histidine 785, serine 786, glutamine 826, and glutamate 838. Mg(2+)-binding residues include glutamine 826, glutamate 838, and asparagine 840. Mn(2+) is bound by residues glutamine 826, glutamate 838, and asparagine 840. One can recognise an MGS-like domain in the interval 936–1078; the sequence is LAIERGAPVL…AYRTREAVLA (143 aa). The tract at residues 936 to 1078 is allosteric domain; sequence LAIERGAPVL…AYRTREAVLA (143 aa).

This sequence belongs to the CarB family. As to quaternary structure, composed of two chains; the small (or glutamine) chain promotes the hydrolysis of glutamine to ammonia, which is used by the large (or ammonia) chain to synthesize carbamoyl phosphate. Tetramer of heterodimers (alpha,beta)4. It depends on Mg(2+) as a cofactor. Requires Mn(2+) as cofactor.

It carries out the reaction hydrogencarbonate + L-glutamine + 2 ATP + H2O = carbamoyl phosphate + L-glutamate + 2 ADP + phosphate + 2 H(+). The enzyme catalyses hydrogencarbonate + NH4(+) + 2 ATP = carbamoyl phosphate + 2 ADP + phosphate + 2 H(+). It functions in the pathway amino-acid biosynthesis; L-arginine biosynthesis; carbamoyl phosphate from bicarbonate: step 1/1. Its pathway is pyrimidine metabolism; UMP biosynthesis via de novo pathway; (S)-dihydroorotate from bicarbonate: step 1/3. Functionally, large subunit of the glutamine-dependent carbamoyl phosphate synthetase (CPSase). CPSase catalyzes the formation of carbamoyl phosphate from the ammonia moiety of glutamine, carbonate, and phosphate donated by ATP, constituting the first step of 2 biosynthetic pathways, one leading to arginine and/or urea and the other to pyrimidine nucleotides. The large subunit (synthetase) binds the substrates ammonia (free or transferred from glutamine from the small subunit), hydrogencarbonate and ATP and carries out an ATP-coupled ligase reaction, activating hydrogencarbonate by forming carboxy phosphate which reacts with ammonia to form carbamoyl phosphate. In Thermomicrobium roseum (strain ATCC 27502 / DSM 5159 / P-2), this protein is Carbamoyl phosphate synthase large chain.